The following is a 1605-amino-acid chain: Sister chromatid cohesion protein PDS5 homolog A (1605 aa).

HEAT repeat units follow at residues 50–89, 96–136, 146–183, 184–221, 261–298, 302–339, 341–378, 380–416, 552–591, 644–681, 723–758, 821–860, 961–1000, and 1050–1088; these read KSIQ…ITAP, NIMK…YRSC, DLVK…EESE, DVQE…HCAP, QALS…LPGR, EEFD…SDPL, AEAS…SALT, IPVD…VYCL, ANIW…LYDF, SLFD…TIRE, KSLS…IAMP, AGVD…AAKA, LYPH…QLYL, and HAIC…KPSE. Disordered stretches follow at residues 1155–1182 and 1203–1262; these read LRAQ…KNDV and ESSN…PKVQ. A compositionally biased stretch (basic and acidic residues) spans 1211–1225; the sequence is SPSERAEICQRDQKG. A Nuclear localization signal 1 motif is present at residues 1226–1233; sequence NKRNVGDA. Serine 1274 bears the Phosphoserine mark. Over residues 1279-1295 the composition is skewed to basic and acidic residues; it reads NVSLDSHDENSDQEKML. Disordered stretches follow at residues 1279-1307, 1324-1353, and 1423-1605; these read NVSL…KKSL, ERSR…SGLA, and GKTA…RTAI. Serine 1299 carries the phosphoserine modification. 2 stretches are compositionally biased toward basic residues: residues 1425-1442 and 1464-1476; these read TAKK…KRSS and KGKR…LKQL. The short motif at 1426-1433 is the Nuclear localization signal 2 element; that stretch reads AKKSRTSK. Composition is skewed to basic and acidic residues over residues 1477 to 1495, 1514 to 1527, and 1534 to 1574; these read HPKD…VESR, GEEK…SLKE, and VVNK…NEME. Phosphoserine is present on residues serine 1524, serine 1562, and serine 1584. Acidic residues predominate over residues 1575–1585; the sequence is REAEENAETSD. Threonine 1588 is modified (phosphothreonine).

Belongs to the PDS5 family. As to quaternary structure, interacts with the cohesin complex. Interacts with DEK3.

It is found in the nucleus. In terms of biological role, cohesin cofactor dispensable during the meiotic division but playing an important role in DNA repair by homologous recombination (HR) probably by helping SMC5/SMC6 complex. Regulator of sister chromatid cohesion in mitosis which may stabilize cohesin complex association with chromatin. May couple sister chromatid cohesion during mitosis to DNA replication. Cohesion ensures that chromosome partitioning is accurate in both meiotic and mitotic cells and plays an important role in DNA repair. The sequence is that of Sister chromatid cohesion protein PDS5 homolog A from Arabidopsis thaliana (Mouse-ear cress).